The primary structure comprises 86 residues: Small ribosomal subunit protein bS18c (86 aa).

The protein belongs to the bacterial ribosomal protein bS18 family. In terms of assembly, part of the 30S ribosomal subunit.

Its subcellular location is the plastid. It is found in the chloroplast. The chain is Small ribosomal subunit protein bS18c from Larix laricina (Tamarack).